Consider the following 311-residue polypeptide: Putative F-box protein At1g31090 (311 aa).

An F-box domain is found at 4–53 (GANSDSIPTDLIYEILSRLSVKPITRFRCVSKLWESIICRQDFTELFHNR). Positions 287 to 311 (RPAEQNTSTSSREDHLVRTVKRKRA) are disordered.

The sequence is that of Putative F-box protein At1g31090 from Arabidopsis thaliana (Mouse-ear cress).